A 276-amino-acid polypeptide reads, in one-letter code: Glutamate racemase (276 aa).

Substrate-binding positions include aspartate 10–serine 11 and tyrosine 42–glycine 43. The active-site Proton donor/acceptor is the cysteine 74. Residue asparagine 75 to threonine 76 coordinates substrate. Cysteine 185 serves as the catalytic Proton donor/acceptor. Threonine 186–histidine 187 contacts substrate.

Belongs to the aspartate/glutamate racemases family.

The enzyme catalyses L-glutamate = D-glutamate. The protein operates within cell wall biogenesis; peptidoglycan biosynthesis. Functionally, provides the (R)-glutamate required for cell wall biosynthesis. The chain is Glutamate racemase from Levilactobacillus brevis (strain ATCC 367 / BCRC 12310 / CIP 105137 / JCM 1170 / LMG 11437 / NCIMB 947 / NCTC 947) (Lactobacillus brevis).